Consider the following 234-residue polypeptide: Large ribosomal subunit protein uL1 (234 aa).

It belongs to the universal ribosomal protein uL1 family. In terms of assembly, part of the 50S ribosomal subunit.

Functionally, binds directly to 23S rRNA. The L1 stalk is quite mobile in the ribosome, and is involved in E site tRNA release. Its function is as follows. Protein L1 is also a translational repressor protein, it controls the translation of the L11 operon by binding to its mRNA. This chain is Large ribosomal subunit protein uL1, found in Bartonella tribocorum (strain CIP 105476 / IBS 506).